The primary structure comprises 423 residues: Glucose-1-phosphate adenylyltransferase (423 aa).

Alpha-D-glucose 1-phosphate-binding positions include Y98, G163, 178–179 (EK), and S189.

Belongs to the bacterial/plant glucose-1-phosphate adenylyltransferase family. In terms of assembly, homotetramer.

It catalyses the reaction alpha-D-glucose 1-phosphate + ATP + H(+) = ADP-alpha-D-glucose + diphosphate. Its pathway is glycan biosynthesis; glycogen biosynthesis. Its function is as follows. Involved in the biosynthesis of ADP-glucose, a building block required for the elongation reactions to produce glycogen. Catalyzes the reaction between ATP and alpha-D-glucose 1-phosphate (G1P) to produce pyrophosphate and ADP-Glc. The chain is Glucose-1-phosphate adenylyltransferase from Thermotoga maritima (strain ATCC 43589 / DSM 3109 / JCM 10099 / NBRC 100826 / MSB8).